The chain runs to 1530 residues: MSHSHPAGLLAAYNSLMDKHLAGYFNNTRIRRHLLRSGLITRSGRILSEKEYKLNMMKRDHQKYIRECLAQAIFHKVLDMERYHQLEIKKKLETLARKERIQRFKGEHTRRSVENNMPILSPHPPVGPKSNRGHSVLVDEGHSSPLALTAPRPYTAPGNMQPPIRLQPLPSNPAVETVPKVTSRSRSKTSLLENEALFPIGGKKAVMKFRNSIGNSQRMNSYQLPNINSYMMPIPPPLPPTGKITRENRSETWRRRRFRPTTAPNGLEPLLTKDSRRIHKTSLHSNAAITMIYLGKNVHLSSDNPDFRDEIKVYQQHCGGENLCVYKGKLLEKETFQFISKRHHGFPFSLTFFLNGMQVNRLSSCCEYKHRKGSRLGGKRGYFGFVCVERSSPCYKCIIAMGLDKKPSLPKSRKEKSTEKGEELKKAEGKVRKEREYVIPKRNEIKENKTSVSAKFSAQEIKTGLKEVVTAVEEMTSKGKPGQEVLEDDQENTLKYEYEEDFEVDEEKQGEKSNEEGQADVQMNGIPQSPLDDKKDNLDPEKESETSSQKAPDARDNVKDENDGCSESELEEDKQDMKTASSTSSRSHPYSSDSEDESAVGDREAHTDSSTDESARRSSSQELSENDKPRKSHLPIEESLEIEIEDQEITKADVETKPMPIDESFENVLKEGTEKGTQEIAEGLSEKSGKHVSAEEKEKDKSKLWEESTAQVKDKKAGLPGLEEGGKDSLPLAYVLALGAPTMNFMVDETAAINSNKESQQLVQKTYTLEKKEAMEEDEAPQHRDADIVQGKGEAALWGEAGAVHEAPLRAWKPTAEQPELAEEFTEKREIPPGIERGAEGAAEAEGVRRLGEGGSDPIGQAAAKDAVGLSKDEAPEKQALMLTVLETDKAASEGEQGLEKAVLANEAAALNLEHLHEVAALREAATSEEGEAEGGVAVSDVGESEEEASIDLEDTGPMEDTASKREDGSEEAILGGEEPAKERKEVMRTETRLSPFTGEAEASRMQVSEGSPEEGSLAKEAFLCKEDVEGEEMVTEAEANREDDRKEILPKELDLARERRKAERPKTSLRKTDSEREEVTRANALKDEDAFKEEQKLKAEEGETETEVRAEEETKAPPNEMGSDAENEAPVEASELSDNPGLLGEDSLKETVVPIFEATPGFEKSLENITALRKEGGGERLSEARDTEHKDREELSSRENRALKEGHRQDGEGALAAPEAEPAGKVQAPEGLIPATGQAEELAAKDHDSCAGLEGRAEGQGGVDVVLRTQEAVAEEDPIMAEKFREEAVDEDPEEEEDKECTLETEAMQDRNSEGDGDMEGEGNTQKNEGMGGGRVVAVEVLHGGGETAETAAEEREVLAGSETAEEKTIANKASSFSDVAEEETWHQQDELVGKTAAAGKVVVEELARSGEEVPAAEEMTVTYTTEAGVGTPGALERKTSGLGQEQEEGSEGQEAATGSGDGRQETGAAEKFRLGLSREGERELSPESLQAMATLPVKPDFTETREKQQHMVQGESETADVSPNNVQV.

Disordered stretches follow at residues 165–187 (RLQP…RSRS), 408–429 (SLPK…KAEG), 475–661 (MTSK…PMPI), 673–724 (TEKG…GLEE), 773–870 (EAME…AVGL), 923–1146 (REAA…LLGE), 1167–1334 (LENI…GMGG), 1360–1383 (LAGS…DVAE), and 1425–1530 (YTTE…NVQV). 3 stretches are compositionally biased toward basic and acidic residues: residues 415-429 (EKST…KAEG), 531-545 (LDDK…KESE), and 552-562 (PDARDNVKDEN). A compositionally biased stretch (acidic residues) spans 563 to 574 (DGCSESELEEDK). Residues 581–592 (SSTSSRSHPYSS) are compositionally biased toward low complexity. The segment covering 600-616 (VGDREAHTDSSTDESAR) has biased composition (basic and acidic residues). Over residues 638–647 (ESLEIEIEDQ) the composition is skewed to acidic residues. Composition is skewed to basic and acidic residues over residues 684-717 (LSEK…DKKA) and 773-787 (EAME…RDAD). Over residues 834 to 845 (GIERGAEGAAEA) the composition is skewed to low complexity. Residues 943–958 (GESEEEASIDLEDTGP) are compositionally biased toward acidic residues. 3 stretches are compositionally biased toward basic and acidic residues: residues 979–992 (EPAK…RTET), 1039–1116 (EANR…EETK), and 1173–1212 (LRKE…RQDG). A compositionally biased stretch (low complexity) spans 1213 to 1225 (EGALAAPEAEPAG). Over residues 1289 to 1300 (AVDEDPEEEEDK) the composition is skewed to acidic residues. Basic and acidic residues-rich tracts occupy residues 1464-1487 (GRQE…RELS) and 1502-1511 (DFTETREKQQ). The span at 1517-1530 (ESETADVSPNNVQV) shows a compositional bias: polar residues.

Interacts with CLTC/clathrin heavy chain 1, AP2A2/AP-2 complex subunit alpha-2, and PIK3C2A/phosphatidylinositol 4-phosphate 3-kinase C2 domain-containing subunit alpha. Expressed in dopaminergic and serotoninergic neurons.

The protein resides in the cell projection. It localises to the cilium. The protein localises to the cytoplasm. Its function is as follows. Component of the primary cilium that controls cilium formation and length. May function within retrograde intraflagellar transport (IFT)-associated pathways to remove signaling proteins from primary cilia. Also involved in neuronal vesicle biogenesis and neurotransmitter vesicular function. The protein is Glutamate-rich protein 3 of Homo sapiens (Human).